We begin with the raw amino-acid sequence, 426 residues long: UDP-N-acetylglucosamine 1-carboxyvinyltransferase (426 aa).

23 to 24 (KN) contacts phosphoenolpyruvate. UDP-N-acetyl-alpha-D-glucosamine is bound at residue R99. D123 acts as the Proton donor in catalysis. The UDP-N-acetyl-alpha-D-glucosamine site is built by D311 and I333.

This sequence belongs to the EPSP synthase family. MurA subfamily.

It localises to the cytoplasm. The enzyme catalyses phosphoenolpyruvate + UDP-N-acetyl-alpha-D-glucosamine = UDP-N-acetyl-3-O-(1-carboxyvinyl)-alpha-D-glucosamine + phosphate. Its pathway is cell wall biogenesis; peptidoglycan biosynthesis. Cell wall formation. Adds enolpyruvyl to UDP-N-acetylglucosamine. This is UDP-N-acetylglucosamine 1-carboxyvinyltransferase from Nocardia farcinica (strain IFM 10152).